Consider the following 60-residue polypeptide: MPNPKRRHSKKRTSTRRAHDALKQPGLSECPNCHEPKVPHRVCPHCGQYKGREVVEVVAE.

A compositionally biased stretch (basic residues) spans 1–16 (MPNPKRRHSKKRTSTR). The segment at 1–28 (MPNPKRRHSKKRTSTRRAHDALKQPGLS) is disordered.

Belongs to the bacterial ribosomal protein bL32 family.

The polypeptide is Large ribosomal subunit protein bL32 (Solibacter usitatus (strain Ellin6076)).